Reading from the N-terminus, the 375-residue chain is Meiotic driver cw27 (375 aa).

Disordered stretches follow at residues 1-42 (MKNK…STLP) and 74-103 (DYDE…GTTD). The span at 11–29 (SMDELSTKNDNEIDLEKGP) shows a compositional bias: basic and acidic residues. The next 7 membrane-spanning stretches (helical) occupy residues 108–128 (FLIK…PAVC), 145–165 (WTLI…SWCF), 172–192 (AVKV…ISLA), 208–228 (EMMI…FGCV), 245–265 (TISA…WTLW), 272–292 (LQVL…MSLF), and 336–356 (VIGF…NAIG).

Belongs to the WTF family. Homomer. Forms protein aggregates. The two isoforms can interact with each other and with themselves. High sequence similarity is required for their interaction.

Its subcellular location is the spore membrane. It localises to the vacuole. The protein resides in the membrane. It is found in the ascus epiplasm. The protein localises to the cytoplasm. Its subcellular location is the endoplasmic reticulum. Functionally, promotes unequal transmission of alleles from the parental zygote to progeny spores by acting as poison/antidote system where the poison and antidote proteins are produced from the same locus; the poison component is trans-acting and targets all spores within an ascus whereas the antidote component is spore-specific, leading to poisoning of all progeny that do not inherit the allele. In terms of biological role, localizes isoform 2 to the vacuole thereby facilitating its degradation. Its function is as follows. Forms toxic aggregates that disrupt spore maturation. The chain is Meiotic driver cw27 from Schizosaccharomyces pombe (Fission yeast).